The primary structure comprises 64 residues: Large ribosomal subunit protein uL30 (64 aa).

The protein belongs to the universal ribosomal protein uL30 family. Part of the 50S ribosomal subunit.

The polypeptide is Large ribosomal subunit protein uL30 (Methylorubrum populi (strain ATCC BAA-705 / NCIMB 13946 / BJ001) (Methylobacterium populi)).